Consider the following 379-residue polypeptide: Flagellin A (379 aa).

Coiled-coil stretches lie at residues 103–128 and 302–341; these read TNSA…RIAE and YVDS…IKDT.

This sequence belongs to the bacterial flagellin family. Heteromer of multiple flagellin subunits including FlaA, FlaB, FlaC, FlaD and possibly FlaE.

The protein resides in the secreted. It localises to the bacterial flagellum. Flagellin is the subunit protein which polymerizes to form the filaments of bacterial flagella. FlaA is essential for flagellar synthesis and full motility. Important for virulence at two different levels: is needed for crossing the fish integument and may play a role once the bacterium has entered the host. This Vibrio anguillarum (Listonella anguillarum) protein is Flagellin A (flaA).